Here is a 253-residue protein sequence, read N- to C-terminus: MTDIPHDHPRYESLLAREKVAAGVKMGITSIQGLIAQGRGESFDYLIGERSTESALYAERAAVAALLLAENPVISVNGNVAALAPDKVVTLADITGARIEVNLFHRTDTRVHLIIEQLKASGAAEVLGKNPDASLELSHDRRLVSSKGIYTADVVLVPLEDGDRCEKLVEMGKTVITIDLNPLSRTSKTATISIVDNLTRALGNMAKFAQEMKKERKEELVKLITTYDNKRTLSEAISEIQEHLKTMAAETGY.

ATP-binding positions include Arg-17, Arg-39, 179 to 181 (DLN), 185 to 186 (RT), and 197 to 198 (NL).

Belongs to the archaeal phosphopantothenate synthetase family. In terms of assembly, homodimer.

The catalysed reaction is (R)-4-phosphopantoate + beta-alanine + ATP = (R)-4'-phosphopantothenate + AMP + diphosphate + H(+). The protein operates within cofactor biosynthesis; coenzyme A biosynthesis. Functionally, catalyzes the condensation of (R)-4-phosphopantoate and beta-alanine to 4'-phosphopantothenate in the CoA biosynthesis pathway. The polypeptide is 4-phosphopantoate--beta-alanine ligase (Methanosarcina mazei (strain ATCC BAA-159 / DSM 3647 / Goe1 / Go1 / JCM 11833 / OCM 88) (Methanosarcina frisia)).